The chain runs to 120 residues: GATA transcription factor 23 (120 aa).

A GATA-type zinc finger spans residues 22 to 76 (KGTIRCCSECKTTKTPMWRGGPTGPKSLCNACGIRHRKQRRSELLGIHIIRSHKS).

It belongs to the type IV zinc-finger family. Class B subfamily.

Its subcellular location is the nucleus. Its function is as follows. Transcriptional regulator that specifically binds 5'-GATA-3' or 5'-GAT-3' motifs within gene promoters. The sequence is that of GATA transcription factor 23 (GATA23) from Arabidopsis thaliana (Mouse-ear cress).